Reading from the N-terminus, the 380-residue chain is Queuine tRNA-ribosyltransferase (380 aa).

Aspartate 96 serves as the catalytic Proton acceptor. Substrate contacts are provided by residues 96–100 (DSGGF), aspartate 150, glutamine 193, and glycine 220. The tract at residues 251–257 (GVGAPDS) is RNA binding. Catalysis depends on aspartate 270, which acts as the Nucleophile. An RNA binding; important for wobble base 34 recognition region spans residues 275–279 (TRIAR). Positions 308, 310, 313, and 339 each coordinate Zn(2+).

This sequence belongs to the queuine tRNA-ribosyltransferase family. Homodimer. Within each dimer, one monomer is responsible for RNA recognition and catalysis, while the other monomer binds to the replacement base PreQ1. Zn(2+) serves as cofactor.

It catalyses the reaction 7-aminomethyl-7-carbaguanine + guanosine(34) in tRNA = 7-aminomethyl-7-carbaguanosine(34) in tRNA + guanine. It functions in the pathway tRNA modification; tRNA-queuosine biosynthesis. Catalyzes the base-exchange of a guanine (G) residue with the queuine precursor 7-aminomethyl-7-deazaguanine (PreQ1) at position 34 (anticodon wobble position) in tRNAs with GU(N) anticodons (tRNA-Asp, -Asn, -His and -Tyr). Catalysis occurs through a double-displacement mechanism. The nucleophile active site attacks the C1' of nucleotide 34 to detach the guanine base from the RNA, forming a covalent enzyme-RNA intermediate. The proton acceptor active site deprotonates the incoming PreQ1, allowing a nucleophilic attack on the C1' of the ribose to form the product. After dissociation, two additional enzymatic reactions on the tRNA convert PreQ1 to queuine (Q), resulting in the hypermodified nucleoside queuosine (7-(((4,5-cis-dihydroxy-2-cyclopenten-1-yl)amino)methyl)-7-deazaguanosine). This Streptococcus gordonii (strain Challis / ATCC 35105 / BCRC 15272 / CH1 / DL1 / V288) protein is Queuine tRNA-ribosyltransferase.